Reading from the N-terminus, the 763-residue chain is Thyrotropin receptor (763 aa).

The first 21 residues, 1–21, serve as a signal peptide directing secretion; it reads MRPTPLLRLALFLVLPSSLGG. The Extracellular segment spans residues 22-412; it reads ERCPSPPCEC…EFNPCEDIMG (391 aa). A disulfide bridge connects residues cysteine 31 and cysteine 41. The LRR 1 repeat unit spans residues 51-74; the sequence is PPSTQTLKFIETHLKTIPSRAFSN. Residues asparagine 77 and asparagine 99 are each glycosylated (N-linked (GlcNAc...) asparagine). LRR repeat units follow at residues 125-150, 151-174, 176-199, 201-223, and 225-248; these read LPLL…IYST, DVFF…AFQG, CNET…AFNG, KLDA…AFAG, and YSGP…GLEH. N-linked (GlcNAc...) asparagine glycans are attached at residues asparagine 177 and asparagine 198. A glycan (N-linked (GlcNAc...) asparagine) is linked at asparagine 302. Tyrosine 384 carries the sulfotyrosine modification. Residues 413–440 form a helical membrane-spanning segment; it reads YKFLRIVVWFVSLLALLGNVFVLVILLT. The Cytoplasmic portion of the chain corresponds to 441-449; it reads SHYKLTVPR. The chain crosses the membrane as a helical span at residues 450 to 472; that stretch reads FLMCNLAFADFCMGLYLLLIASV. At 473-493 the chain is on the extracellular side; the sequence is DLYTQSEYYNHAIDWQTGPGC. Cysteines 493 and 568 form a disulfide. The helical transmembrane segment at 494-516 threads the bilayer; sequence NTAGFFTVFASELSVYTLTVITL. The Cytoplasmic segment spans residues 517 to 536; that stretch reads ERWHAITFAMRLDRKIRLWH. A helical membrane pass occupies residues 537-559; the sequence is AYVIMLGGWVCCFLLALLPLVGI. Over 560–579 the chain is Extracellular; the sequence is SSYAKVSICLPMDTETPLAL. A helical transmembrane segment spans residues 580–601; it reads AYIILVLLLNIIAFIIVCACYV. At 602 to 624 the chain is on the cytoplasmic side; sequence KIYITVRNPHYNPGDKDTRIAKR. Residues 625–648 traverse the membrane as a helical segment; it reads MAVLIFTDFMCMAPISFYALSALM. Over 649–659 the chain is Extracellular; the sequence is NKPLITVTNSK. Residues 660 to 681 traverse the membrane as a helical segment; the sequence is ILLVLFYPLNSCANPFLYAIFT. Topologically, residues 682 to 763 are cytoplasmic; it reads KAFQRDVFML…TSKEYKRTVL (82 aa). The tract at residues 742–763 is disordered; that stretch reads ENSHLTPKQQDQTSKEYKRTVL. Positions 744-753 are enriched in polar residues; that stretch reads SHLTPKQQDQ. A compositionally biased stretch (basic and acidic residues) spans 754-763; it reads TSKEYKRTVL. Positions 761 to 763 match the PDZ-binding motif; the sequence is TVL.

This sequence belongs to the G-protein coupled receptor 1 family. FSH/LSH/TSH subfamily. As to quaternary structure, interacts with heterodimer GPHA2:GPHB5; this interaction stimulates cAMP production. Interacts (via the PDZ-binding motif) with SCRIB; regulates TSHR trafficking and function. In terms of processing, glycosylated. Sulfated. Sulfation on Tyr-384 plays a role in thyrotropin receptor binding and activation.

It is found in the cell membrane. Its subcellular location is the basolateral cell membrane. Its function is as follows. Receptor for the thyroid-stimulating hormone (TSH) or thyrotropin. Also acts as a receptor for the heterodimeric glycoprotein hormone (GPHA2:GPHB5) or thyrostimulin. The activity of this receptor is mediated by G proteins which activate adenylate cyclase. Plays a central role in controlling thyroid cell metabolism. This is Thyrotropin receptor (TSHR) from Bos taurus (Bovine).